The chain runs to 119 residues: Small ribosomal subunit protein uS13 (119 aa).

A compositionally biased stretch (basic residues) spans 94 to 113; that stretch reads GLPVRGQRTKTNARTRKGPR. The tract at residues 94–119 is disordered; that stretch reads GLPVRGQRTKTNARTRKGPRKAIGAK.

The protein belongs to the universal ribosomal protein uS13 family. As to quaternary structure, part of the 30S ribosomal subunit. Forms a loose heterodimer with protein S19. Forms two bridges to the 50S subunit in the 70S ribosome.

Located at the top of the head of the 30S subunit, it contacts several helices of the 16S rRNA. In the 70S ribosome it contacts the 23S rRNA (bridge B1a) and protein L5 of the 50S subunit (bridge B1b), connecting the 2 subunits; these bridges are implicated in subunit movement. Contacts the tRNAs in the A and P-sites. This chain is Small ribosomal subunit protein uS13, found in Nitrosomonas europaea (strain ATCC 19718 / CIP 103999 / KCTC 2705 / NBRC 14298).